A 510-amino-acid chain; its full sequence is MALEITPALSLLDEHHLLKEVVNEQKLTFENVTYDSRKVSDNTLFFCKGNFKPSYLTSALEKGATAYVSEQKYAEGMDATGIIVTNVQKAMALLGAAFYGFPQNELFIIAYTGTKGKTTSAYFAEHILAKATDKKVALFSTIDRVLGNEPDQRFKSDLTTPESLDLFHDMRAAVNNGMTHLVMEVSSQAYKKNRVYGLTFDVGVFLNISPDHIGRNEHPTFDDYLHCKEQLLVNSKRCVINGETAYLRDVYYTAKATTEPEDIYVFARKGAQISDNIPVDIEYQNDFEDLHKSVIEVKGLSDKAQTLHVDGKYELSVPGDYNEGNATSAIIATLLAGAKGEDARKTLDRVHIPGRMEIIKTKNNGTIYVDYAHNYASLKALFAFLKQQTHAGRVIAVLGSPGDKGISRRPGFGKAVSEEVDHVILTTDDPGFEDPMKIAQEIDSYINHDNVKVEFELDREIAIEKAIKMSTNNDIVVLAGKGEDPYQKIKGVDVPYPSDVNVAKKIVEEL.

Ser36 is a binding site for UDP-N-acetyl-alpha-D-muramoyl-L-alanyl-D-glutamate. Position 113–119 (113–119 (GTKGKTT)) interacts with ATP. Residues 159 to 160 (TT), Ser186, and Arg194 each bind UDP-N-acetyl-alpha-D-muramoyl-L-alanyl-D-glutamate. Residue Lys228 is modified to N6-carboxylysine.

The protein belongs to the MurCDEF family. MurE subfamily. Post-translationally, carboxylation is probably crucial for Mg(2+) binding and, consequently, for the gamma-phosphate positioning of ATP.

Its subcellular location is the cytoplasm. It participates in cell wall biogenesis; peptidoglycan biosynthesis. In terms of biological role, catalyzes the addition of an amino acid to the nucleotide precursor UDP-N-acetylmuramoyl-L-alanyl-D-glutamate (UMAG) in the biosynthesis of bacterial cell-wall peptidoglycan. This chain is UDP-N-acetylmuramyl-tripeptide synthetase, found in Ligilactobacillus salivarius (strain UCC118) (Lactobacillus salivarius).